The primary structure comprises 313 residues: Olfactory receptor 5D18 (313 aa).

At 1-26 (MLLTDRNTSGTTFTLLGFSDYPELQV) the chain is on the extracellular side. The N-linked (GlcNAc...) asparagine glycan is linked to Asn-7. Residues 27–47 (PLFLVFLAIYNVTVLGNIGLI) form a helical membrane-spanning segment. Topologically, residues 48-55 (VIIKINPK) are cytoplasmic. A helical transmembrane segment spans residues 56-76 (LHTPMYFFLSQLSFVDFCYSS). Over 77–100 (IIAPKMLVNLVVKDRTISFLGCVV) the chain is Extracellular. Cysteines 98 and 190 form a disulfide. The helical transmembrane segment at 101-121 (QFFFFCTFVVTESFLLAVMAY) threads the bilayer. Residues 122–140 (DRFVAICNPLLYTVNMSQK) lie on the Cytoplasmic side of the membrane. A helical membrane pass occupies residues 141–161 (LCVLLVVGSYAWGVSCSLELT). Residues 162 to 197 (CSALKLCFHGFNTINHFFCEFSSLLSLSCSDTYINQ) are Extracellular-facing. The chain crosses the membrane as a helical span at residues 198–218 (WLLFFLATFNEISTLLIVLTS). Residues 219 to 238 (YAFIVVTILKMRSVSGRRKA) are Cytoplasmic-facing. A helical membrane pass occupies residues 239 to 259 (FSTCASHLTAITIFHGTILFL). At 260–272 (YCVPNSKNSRHTV) the chain is on the extracellular side. The helical transmembrane segment at 273–293 (KVASVFYTVVIPMLNPLIYSL) threads the bilayer. Over 294–313 (RNKDVKDTVTEILDTKVFSY) the chain is Cytoplasmic.

This sequence belongs to the G-protein coupled receptor 1 family.

The protein localises to the cell membrane. Its function is as follows. Odorant receptor. The protein is Olfactory receptor 5D18 (OR5D18) of Homo sapiens (Human).